A 602-amino-acid chain; its full sequence is Alpha-glucosides permease MPH3 (602 aa).

Over 1–106 the chain is Cytoplasmic; that stretch reads MKNLSFLINR…AAAWSLLVST (106 aa). The helical transmembrane segment at 107-127 threads the bilayer; the sequence is TLIMEGYDTAILGAFYALPIF. Residues 128 to 142 lie on the Extracellular side of the membrane; it reads QRKFGSQNDKTGEWE. Residues 143 to 163 traverse the membrane as a helical segment; the sequence is ISASWQIGLTLCYMAGEIVGL. The Cytoplasmic portion of the chain corresponds to 164-178; that stretch reads QLTGPSVDLVGNRYT. Residues 179–199 form a helical membrane-spanning segment; that stretch reads LIIALFFLAAFTFILYFCNSL. Position 200 (G200) is a topological domain, extracellular. Residues 201–221 form a helical membrane-spanning segment; the sequence is MIAVGQALCGMPWGCFQCLTV. Residues 222–234 are Cytoplasmic-facing; sequence SYASEICPLALRY. Residues 235-255 traverse the membrane as a helical segment; the sequence is YLTTYSNLCWLFGQLFAAGIM. Residues 256–270 are Extracellular-facing; it reads KNSQKKYADSELGYK. Residues 271-291 traverse the membrane as a helical segment; sequence LPFALQWILPVPLALGIFFAP. Residues 292–363 are Cytoplasmic-facing; it reads ESPWWLVKKG…EDKINRRRTR (72 aa). Residues 364-384 traverse the membrane as a helical segment; it reads ITCLCWAGQATCGSILIGYST. At 385-397 the chain is on the extracellular side; the sequence is YFYEKAGVSTEMS. A helical transmembrane segment spans residues 398 to 418; the sequence is FTFSIIQYCLGICATFLSWWA. Residues 419-426 lie on the Cytoplasmic side of the membrane; it reads SKYFGRYD. A helical membrane pass occupies residues 427–447; it reads LYAFGLAFQTIVFFIIGGLGC. Over 448–459 the chain is Extracellular; sequence SSTHGSKMGSGS. Residues 460–480 traverse the membrane as a helical segment; it reads LLMAVAFFYNLGIAPVVFCLV. Over 481–492 the chain is Cytoplasmic; it reads SEMPSSRLRTKT. The helical transmembrane segment at 493-513 threads the bilayer; it reads IILARNTYNVVSIICSVLILY. Topologically, residues 514 to 525 are extracellular; it reads QLNSKKWNWGAK. Residues 526–546 form a helical membrane-spanning segment; that stretch reads SGFFWGVLCFCTLIWAVVDLP. Residues 547–602 are Cytoplasmic-facing; that stretch reads ETAGKTFVEINELFKLGVSARKFKSTKVDPFVVKNPPKDVSHNDPKGDIEASIAEE. Residues 580-602 form a disordered region; that stretch reads KNPPKDVSHNDPKGDIEASIAEE. Residues 582 to 595 show a composition bias toward basic and acidic residues; it reads PPKDVSHNDPKGDI.

This sequence belongs to the major facilitator superfamily. Sugar transporter (TC 2.A.1.1) family.

Its subcellular location is the cell membrane. High-affinity uptake of maltose and maltotriose. Also transports alpha-methylglucoside, glucose and turanose but not melezitose or trehalose. This Saccharomyces cerevisiae (strain AWRI1631) (Baker's yeast) protein is Alpha-glucosides permease MPH3 (MPH3).